The chain runs to 498 residues: ATP synthase subunit beta, chloroplastic (498 aa).

T6 carries the phosphothreonine modification. S13 bears the Phosphoserine mark. Position 172–179 (172–179 (GGAGVGKT)) interacts with ATP.

It belongs to the ATPase alpha/beta chains family. F-type ATPases have 2 components, CF(1) - the catalytic core - and CF(0) - the membrane proton channel. CF(1) has five subunits: alpha(3), beta(3), gamma(1), delta(1), epsilon(1). CF(0) has four main subunits: a(1), b(1), b'(1) and c(9-12).

Its subcellular location is the plastid. It localises to the chloroplast thylakoid membrane. The enzyme catalyses ATP + H2O + 4 H(+)(in) = ADP + phosphate + 5 H(+)(out). In terms of biological role, produces ATP from ADP in the presence of a proton gradient across the membrane. The catalytic sites are hosted primarily by the beta subunits. In Barbarea verna (Land cress), this protein is ATP synthase subunit beta, chloroplastic.